Reading from the N-terminus, the 192-residue chain is GTP cyclohydrolase-2 (192 aa).

50–54 (RLHSE) lines the GTP pocket. Zn(2+)-binding residues include C55, C66, and C68. Residues 92–94 (EGR) and T114 each bind GTP. D126 serves as the catalytic Proton acceptor. The active-site Nucleophile is R128. Positions 149 and 154 each coordinate GTP.

Belongs to the GTP cyclohydrolase II family. Requires Zn(2+) as cofactor.

The enzyme catalyses GTP + 4 H2O = 2,5-diamino-6-hydroxy-4-(5-phosphoribosylamino)-pyrimidine + formate + 2 phosphate + 3 H(+). It participates in cofactor biosynthesis; riboflavin biosynthesis; 5-amino-6-(D-ribitylamino)uracil from GTP: step 1/4. In terms of biological role, catalyzes the conversion of GTP to 2,5-diamino-6-ribosylamino-4(3H)-pyrimidinone 5'-phosphate (DARP), formate and pyrophosphate. The sequence is that of GTP cyclohydrolase-2 from Helicobacter pylori (strain J99 / ATCC 700824) (Campylobacter pylori J99).